Here is a 284-residue protein sequence, read N- to C-terminus: NAD kinase (284 aa).

Asp-67 serves as the catalytic Proton acceptor. NAD(+) is bound by residues 67-68, 141-142, Arg-152, Lys-169, Asp-171, 182-187, and Gln-241; these read DG, ND, and TGYSLS.

It belongs to the NAD kinase family. The cofactor is a divalent metal cation.

Its subcellular location is the cytoplasm. It catalyses the reaction NAD(+) + ATP = ADP + NADP(+) + H(+). Functionally, involved in the regulation of the intracellular balance of NAD and NADP, and is a key enzyme in the biosynthesis of NADP. Catalyzes specifically the phosphorylation on 2'-hydroxyl of the adenosine moiety of NAD to yield NADP. The polypeptide is NAD kinase (Geobacter sulfurreducens (strain ATCC 51573 / DSM 12127 / PCA)).